The chain runs to 92 residues: Small ribosomal subunit protein uS19 (92 aa).

Belongs to the universal ribosomal protein uS19 family.

Its function is as follows. Protein S19 forms a complex with S13 that binds strongly to the 16S ribosomal RNA. The polypeptide is Small ribosomal subunit protein uS19 (Legionella pneumophila (strain Paris)).